Reading from the N-terminus, the 305-residue chain is UDP-3-O-acyl-N-acetylglucosamine deacetylase (305 aa).

Zn(2+)-binding residues include His-79, His-238, and Asp-242. The active-site Proton donor is His-265.

This sequence belongs to the LpxC family. It depends on Zn(2+) as a cofactor.

It carries out the reaction a UDP-3-O-[(3R)-3-hydroxyacyl]-N-acetyl-alpha-D-glucosamine + H2O = a UDP-3-O-[(3R)-3-hydroxyacyl]-alpha-D-glucosamine + acetate. It participates in glycolipid biosynthesis; lipid IV(A) biosynthesis; lipid IV(A) from (3R)-3-hydroxytetradecanoyl-[acyl-carrier-protein] and UDP-N-acetyl-alpha-D-glucosamine: step 2/6. In terms of biological role, catalyzes the hydrolysis of UDP-3-O-myristoyl-N-acetylglucosamine to form UDP-3-O-myristoylglucosamine and acetate, the committed step in lipid A biosynthesis. The sequence is that of UDP-3-O-acyl-N-acetylglucosamine deacetylase from Colwellia psychrerythraea (strain 34H / ATCC BAA-681) (Vibrio psychroerythus).